A 352-amino-acid chain; its full sequence is C-C chemokine receptor type 5 (352 aa).

Over 1–30 the chain is Extracellular; that stretch reads MDYQVSSPTYDIDYYTSEPCQKINVKQIAA. Tyr-3 carries the sulfotyrosine modification. 2 O-linked (GalNAc...) serine glycosylation sites follow: Ser-6 and Ser-7. Sulfotyrosine occurs at positions 10, 14, and 15. Cystine bridges form between Cys-20–Cys-269 and Cys-101–Cys-178. The helical transmembrane segment at 31-58 threads the bilayer; sequence RLLPPLYSLVFIFGFVGNILVVLILINC. At 59 to 68 the chain is on the cytoplasmic side; the sequence is KRLKSMTDIY. The helical transmembrane segment at 69 to 89 threads the bilayer; sequence LLNLAISDLLFLLTVPFWAHY. At 90–102 the chain is on the extracellular side; it reads AAAQWDFGNTMCQ. Residues 103 to 124 traverse the membrane as a helical segment; it reads LLTGLYFIGFFSGIFFIILLTI. The Cytoplasmic segment spans residues 125 to 141; the sequence is DRYLAIVHAVFALKART. Residues 142–166 traverse the membrane as a helical segment; it reads VTFGVVTSVITWVVAVFASLPGIIF. Residues 167–198 are Extracellular-facing; sequence TRSQREGLHYTCSSHFPYSQYQFWKNFQTLKM. Residues 199-218 traverse the membrane as a helical segment; it reads VILGLVLPLLVMVICYSGIL. Residues 219-235 are Cytoplasmic-facing; it reads KTLLRCRNEKKRHRAVR. The helical transmembrane segment at 236-260 threads the bilayer; the sequence is LIFTIMIVYFLFWAPYNIVLLLNTF. Over 261–277 the chain is Extracellular; that stretch reads QEFFGLNNCSSSNRLDQ. A helical membrane pass occupies residues 278 to 301; the sequence is AMQVTETLGMTHCCINPIIYAFVG. The Cytoplasmic segment spans residues 302-352; it reads EKFRNYLLVFFQKHIAKRFCKCCSIFQQEAPERASSVYTRSTGEQEISVGL. 3 S-palmitoyl cysteine lipidation sites follow: Cys-321, Cys-323, and Cys-324. Residues Ser-336, Ser-337, Ser-342, and Ser-349 each carry the phosphoserine; by BARK1 modification.

The protein belongs to the G-protein coupled receptor 1 family. In terms of assembly, interacts with PRAF2. Efficient ligand binding to CCL3/MIP-1alpha and CCL4/MIP-1beta requires sulfation, O-glycosylation and sialic acid modifications. Glycosylation on Ser-6 is required for efficient binding of CCL4. Interacts with GRK2. Interacts with ARRB1 and ARRB2. Interacts with CNIH4. Interacts with S100A4; this interaction stimulates T-lymphocyte chemotaxis. Sulfated on at least 2 of the N-terminal tyrosines. Sulfation is required for efficient binding of the chemokines, CCL3 and CCL4. Post-translationally, palmitoylation in the C-terminal is important for cell surface expression. In terms of processing, phosphorylation on serine residues in the C-terminal is stimulated by binding CC chemokines especially by APO-RANTES. O-glycosylated, but not N-glycosylated. Ser-6 appears to be the major site even if Ser-7 may be also O-glycosylated. Also sialylated glycans present which contribute to chemokine binding. Thr-16 and Ser-17 may also be glycosylated and, if so, with small moieties such as a T-antigen.

It is found in the cell membrane. Functionally, receptor for a number of inflammatory CC-chemokines including CCL3/MIP-1-alpha, CCL4/MIP-1-beta and RANTES and subsequently transduces a signal by increasing the intracellular calcium ion level. May play a role in the control of granulocytic lineage proliferation or differentiation. Participates in T-lymphocyte migration to the infection site by acting as a chemotactic receptor. This is C-C chemokine receptor type 5 (CCR5) from Macaca fascicularis (Crab-eating macaque).